The primary structure comprises 216 residues: MLIAKLLLVVIVSYLLGSIPFGYLVSHRGSKIDIRSYGSGRTGATNVLRTMGRKAALLVAALDVVKGVSAVAFAGLVIGTEALTFGTNGMAILFAQVLAGLAAVAGHIWPVFLKFRGGRGVATFFGGMIALCPVAAIFGGEVLIIGAGLSGFASLGSITGVVGAYALLIPLTFISGFPTEYIVYAVLGSLLITIMHRDNIKRLLAGKERKLNEKSR.

A run of 5 helical transmembrane segments spans residues 6–26 (LLLV…YLVS), 58–78 (LVAA…GLVI), 92–112 (ILFA…WPVF), 125–145 (FGGM…VLII), and 158–178 (ITGV…SGFP).

Belongs to the PlsY family. In terms of assembly, probably interacts with PlsX.

It localises to the cell membrane. It catalyses the reaction an acyl phosphate + sn-glycerol 3-phosphate = a 1-acyl-sn-glycero-3-phosphate + phosphate. The protein operates within lipid metabolism; phospholipid metabolism. In terms of biological role, catalyzes the transfer of an acyl group from acyl-phosphate (acyl-PO(4)) to glycerol-3-phosphate (G3P) to form lysophosphatidic acid (LPA). This enzyme utilizes acyl-phosphate as fatty acyl donor, but not acyl-CoA or acyl-ACP. The sequence is that of Glycerol-3-phosphate acyltransferase 3 from Dehalococcoides mccartyi (strain ATCC BAA-2266 / KCTC 15142 / 195) (Dehalococcoides ethenogenes (strain 195)).